The sequence spans 217 residues: T-complex protein 10A homolog 1 (217 aa).

Residues 1–26 are disordered; the sequence is MLAGQLEARDPKEGTHPEDPCPGAGA. A compositionally biased stretch (basic and acidic residues) spans 7 to 19; that stretch reads EARDPKEGTHPED. Residues 69–110 are a coiled coil; it reads ADVHGKLRSHIDALREQNMELREKLRALQLQRWKARKKSAAS. The segment at 75-96 is leucine-zipper; that stretch reads LRSHIDALREQNMELREKLRAL. Over residues 175 to 192 the composition is skewed to basic and acidic residues; that stretch reads ERISSWKTPPQEKRDKSL. Residues 175–217 are disordered; sequence ERISSWKTPPQEKRDKSLSRRRQDRRATPTGRPTPCAERRGGV.

It belongs to the TCP10 family. Self-associates (via leucine zipper). Interacts (via leucine zipper) with ZIPK/DAPK3 (via leucine zipper). Interacts with MAD4.

It is found in the nucleus. May be involved in transcriptional regulation. Has in vitro transcription inhibition activity. This is T-complex protein 10A homolog 1 (TCP10L) from Pan troglodytes (Chimpanzee).